Reading from the N-terminus, the 298-residue chain is Ribosomal protein L11 methyltransferase (298 aa).

Positions 139, 163, 185, and 232 each coordinate S-adenosyl-L-methionine.

Belongs to the methyltransferase superfamily. PrmA family.

The protein localises to the cytoplasm. It catalyses the reaction L-lysyl-[protein] + 3 S-adenosyl-L-methionine = N(6),N(6),N(6)-trimethyl-L-lysyl-[protein] + 3 S-adenosyl-L-homocysteine + 3 H(+). Functionally, methylates ribosomal protein L11. The sequence is that of Ribosomal protein L11 methyltransferase from Microcystis aeruginosa (strain NIES-843 / IAM M-2473).